A 291-amino-acid chain; its full sequence is Elongation factor Ts (291 aa).

The tract at residues 79 to 82 (TDFV) is involved in Mg(2+) ion dislocation from EF-Tu.

It belongs to the EF-Ts family.

Its subcellular location is the cytoplasm. Its function is as follows. Associates with the EF-Tu.GDP complex and induces the exchange of GDP to GTP. It remains bound to the aminoacyl-tRNA.EF-Tu.GTP complex up to the GTP hydrolysis stage on the ribosome. The protein is Elongation factor Ts of Ruegeria sp. (strain TM1040) (Silicibacter sp.).